The following is a 419-amino-acid chain: Ribosomal RNA large subunit methyltransferase G (419 aa).

Residues 386 to 408 (KAEPFETHPTEAEAKVEVTESKP) show a composition bias toward basic and acidic residues. Residues 386-419 (KAEPFETHPTEAEAKVEVTESKPHPQSSLYGTKK) are disordered. Residues 409–419 (HPQSSLYGTKK) are compositionally biased toward polar residues.

It belongs to the methyltransferase superfamily. RlmG family.

It localises to the cytoplasm. The catalysed reaction is guanosine(1835) in 23S rRNA + S-adenosyl-L-methionine = N(2)-methylguanosine(1835) in 23S rRNA + S-adenosyl-L-homocysteine + H(+). Specifically methylates the guanine in position 1835 (m2G1835) of 23S rRNA. In Shewanella woodyi (strain ATCC 51908 / MS32), this protein is Ribosomal RNA large subunit methyltransferase G.